The sequence spans 358 residues: Methionine aminopeptidase 2 (358 aa).

Residue His109 coordinates substrate. Asp130, Asp141, and His210 together coordinate a divalent metal cation. Position 218 (His218) interacts with substrate. Residues Glu243 and Glu339 each coordinate a divalent metal cation.

This sequence belongs to the peptidase M24A family. Methionine aminopeptidase eukaryotic type 2 subfamily. Co(2+) serves as cofactor. The cofactor is Zn(2+). Mn(2+) is required as a cofactor. It depends on Fe(2+) as a cofactor.

It localises to the cytoplasm. The enzyme catalyses Release of N-terminal amino acids, preferentially methionine, from peptides and arylamides.. Functionally, cotranslationally removes the N-terminal methionine from nascent proteins. The N-terminal methionine is often cleaved when the second residue in the primary sequence is small and uncharged (Met-Ala-, Cys, Gly, Pro, Ser, Thr, or Val). The sequence is that of Methionine aminopeptidase 2 from Encephalitozoon cuniculi (strain GB-M1) (Microsporidian parasite).